Reading from the N-terminus, the 81-residue chain is Photosystem I iron-sulfur center (81 aa).

4Fe-4S ferredoxin-type domains lie at 2-31 (SHKI…MIPW) and 39-68 (IASA…VRVY). Positions 11, 14, 17, 21, 48, 51, 54, and 58 each coordinate [4Fe-4S] cluster.

In terms of assembly, the eukaryotic PSI reaction center is composed of at least 11 subunits. [4Fe-4S] cluster serves as cofactor.

The protein resides in the plastid. Its subcellular location is the chloroplast thylakoid membrane. It catalyses the reaction reduced [plastocyanin] + hnu + oxidized [2Fe-2S]-[ferredoxin] = oxidized [plastocyanin] + reduced [2Fe-2S]-[ferredoxin]. Functionally, apoprotein for the two 4Fe-4S centers FA and FB of photosystem I (PSI); essential for photochemical activity. FB is the terminal electron acceptor of PSI, donating electrons to ferredoxin. The C-terminus interacts with PsaA/B/D and helps assemble the protein into the PSI complex. Required for binding of PsaD and PsaE to PSI. PSI is a plastocyanin-ferredoxin oxidoreductase, converting photonic excitation into a charge separation, which transfers an electron from the donor P700 chlorophyll pair to the spectroscopically characterized acceptors A0, A1, FX, FA and FB in turn. This is Photosystem I iron-sulfur center from Chara vulgaris (Common stonewort).